The chain runs to 705 residues: Probable iron-sulfur-binding oxidoreductase FadF (705 aa).

6 helical membrane-spanning segments follow: residues phenylalanine 4–valine 24, isoleucine 71–isoleucine 91, alanine 109–phenylalanine 129, alanine 146–methionine 166, histidine 173–glycine 193, and valine 199–valine 219. 2 4Fe-4S ferredoxin-type domains span residues glutamine 268–proline 298 and glycine 360–isoleucine 391. The [4Fe-4S] cluster site is built by cysteine 277, cysteine 280, cysteine 283, cysteine 287, cysteine 371, cysteine 374, cysteine 377, and cysteine 381.

Requires [4Fe-4S] cluster as cofactor.

It is found in the cell membrane. This Bacillus subtilis (strain 168) protein is Probable iron-sulfur-binding oxidoreductase FadF (fadF).